We begin with the raw amino-acid sequence, 247 residues long: Adenosylcobinamide-GDP ribazoletransferase (247 aa).

6 helical membrane passes run 31–51 (ILFY…VTCI), 55–75 (LPAL…TGGL), 109–129 (IGVL…YVLI), 135–155 (LFLI…FLTT), 183–203 (VLLL…GFLI), and 227–247 (AIEI…FYLV).

It belongs to the CobS family. Requires Mg(2+) as cofactor.

It is found in the cell inner membrane. It carries out the reaction alpha-ribazole + adenosylcob(III)inamide-GDP = adenosylcob(III)alamin + GMP + H(+). The catalysed reaction is alpha-ribazole 5'-phosphate + adenosylcob(III)inamide-GDP = adenosylcob(III)alamin 5'-phosphate + GMP + H(+). It participates in cofactor biosynthesis; adenosylcobalamin biosynthesis; adenosylcobalamin from cob(II)yrinate a,c-diamide: step 7/7. Functionally, joins adenosylcobinamide-GDP and alpha-ribazole to generate adenosylcobalamin (Ado-cobalamin). Also synthesizes adenosylcobalamin 5'-phosphate from adenosylcobinamide-GDP and alpha-ribazole 5'-phosphate. The chain is Adenosylcobinamide-GDP ribazoletransferase from Acinetobacter baumannii (strain ATCC 17978 / DSM 105126 / CIP 53.77 / LMG 1025 / NCDC KC755 / 5377).